The primary structure comprises 469 residues: Extracellular endo-alpha-(1-&gt;5)-L-arabinanase 2 (469 aa).

A signal peptide spans 1-26 (MFNRLFRVCFLAALIMAFTLPNSVYA). Aspartate 38 serves as the catalytic Proton acceptor. Substrate is bound by residues aspartate 38, aspartate 122, 168-171 (NVVD), 188-190 (SYS), and 220-224 (HSRIE). Glutamate 224 acts as the Proton donor in catalysis. Histidine 318 is a Ca(2+) binding site.

This sequence belongs to the glycosyl hydrolase 43 family. Homodimer. Requires Ca(2+) as cofactor.

It is found in the secreted. It catalyses the reaction Endohydrolysis of (1-&gt;5)-alpha-arabinofuranosidic linkages in (1-&gt;5)-arabinans.. It functions in the pathway glycan metabolism; L-arabinan degradation. Functionally, involved in the degradation of arabinan and is a key enzyme in the complete degradation of the plant cell wall. Catalyzes the internal cleavage of alpha-(1-&gt;5)-L-arabinofuranosyl residues of the alpha-1,5-L-arabinan to produce arabino-oligosaccharides and L-arabinose. It is also active toward linear branched sugar beet arabinan, and pectin from apple. The polypeptide is Extracellular endo-alpha-(1-&gt;5)-L-arabinanase 2 (abn2) (Bacillus subtilis (strain 168)).